The chain runs to 140 residues: 3-hydroxyacyl-[acyl-carrier-protein] dehydratase FabZ (140 aa).

The active site involves histidine 48.

The protein belongs to the thioester dehydratase family. FabZ subfamily.

It is found in the cytoplasm. It carries out the reaction a (3R)-hydroxyacyl-[ACP] = a (2E)-enoyl-[ACP] + H2O. Involved in unsaturated fatty acids biosynthesis. Catalyzes the dehydration of short chain beta-hydroxyacyl-ACPs and long chain saturated and unsaturated beta-hydroxyacyl-ACPs. The sequence is that of 3-hydroxyacyl-[acyl-carrier-protein] dehydratase FabZ from Caldicellulosiruptor saccharolyticus (strain ATCC 43494 / DSM 8903 / Tp8T 6331).